Reading from the N-terminus, the 388-residue chain is D-xylose dehydrogenase (388 aa).

The protein belongs to the Gfo/Idh/MocA family. Homotetramer. It depends on Zn(2+) as a cofactor.

The catalysed reaction is D-xylose + NADP(+) = D-xylono-1,5-lactone + NADPH + H(+). It carries out the reaction D-xylose + NAD(+) = D-xylono-1,5-lactone + NADH + H(+). It functions in the pathway carbohydrate metabolism; D-xylose degradation. In terms of biological role, catalyzes the NADP(+)-dependent oxidation of D-xylose. Is able to use both NADP(+) and NAD(+); however, the enzyme shows a very strong preference for NADP(+). Is likely involved in the first step of the oxidative D-xylose degradation pathway. The sequence is that of D-xylose dehydrogenase (xdh) from Paenarthrobacter nicotinovorans (Arthrobacter nicotinovorans).